The following is a 417-amino-acid chain: NADH-quinone oxidoreductase subunit D (417 aa).

Belongs to the complex I 49 kDa subunit family. As to quaternary structure, NDH-1 is composed of 14 different subunits. Subunits NuoB, C, D, E, F, and G constitute the peripheral sector of the complex.

It localises to the cell inner membrane. The catalysed reaction is a quinone + NADH + 5 H(+)(in) = a quinol + NAD(+) + 4 H(+)(out). Functionally, NDH-1 shuttles electrons from NADH, via FMN and iron-sulfur (Fe-S) centers, to quinones in the respiratory chain. The immediate electron acceptor for the enzyme in this species is believed to be ubiquinone. Couples the redox reaction to proton translocation (for every two electrons transferred, four hydrogen ions are translocated across the cytoplasmic membrane), and thus conserves the redox energy in a proton gradient. The sequence is that of NADH-quinone oxidoreductase subunit D from Cupriavidus necator (strain ATCC 17699 / DSM 428 / KCTC 22496 / NCIMB 10442 / H16 / Stanier 337) (Ralstonia eutropha).